A 388-amino-acid chain; its full sequence is MKTLIAAYSGVLRGERRAEAARSENKNKGSALSREGSGRWGTGSSILSALQDIFSVTWLNRSKVEKQLQVISVLQWVLSFLVLGVACSVILMYTFCTDCWLIAVLYFTWLAFDWNTPKKGGRRSQWVRNWAVWRYFRDYFPIQLVKTHNLLTTRNYIFGYHPHGIMGLGAFCNFSTEATEVSKKFPGIRPYLATLAGNFRMPVLREYLMSGGICPVNRDTIDYLLSKNGSGNAIIIVVGGAAESLSSMPGKNAVTLKNRKGFVKLALRHGADLVPTYSFGENEVYKQVIFEEGSWGRWVQKKFQKYIGFAPCIFHGRGLFSSDTWGLVPYSKPITTVVGEPITVPKLEHPTQKDIDLYHAMYMEALVKLFDNHKTKFGLPETEVLEVN.

Over 1–69 (MKTLIAAYSG…NRSKVEKQLQ (69 aa)) the chain is Cytoplasmic. The helical transmembrane segment at 70-88 (VISVLQWVLSFLVLGVACS) threads the bilayer. The Lumenal segment spans residues 89-92 (VILM). A helical membrane pass occupies residues 93–112 (YTFCTDCWLIAVLYFTWLAF). The Cytoplasmic portion of the chain corresponds to 113–388 (DWNTPKKGGR…LPETEVLEVN (276 aa)).

Belongs to the diacylglycerol acyltransferase family. Forms multimeric complexes consisting of several DGAT2 subunits. Interacts with SLC27A1 and this interaction is enhanced in the presence of ZFYVE1. In terms of tissue distribution, predominantly expressed in liver. Also expressed in testis.

It localises to the endoplasmic reticulum membrane. The protein localises to the lipid droplet. Its subcellular location is the cytoplasm. It is found in the perinuclear region. The catalysed reaction is an acyl-CoA + a 1,2-diacyl-sn-glycerol = a triacyl-sn-glycerol + CoA. It carries out the reaction all-trans-retinol + an acyl-CoA = an all-trans-retinyl ester + CoA. It catalyses the reaction 1,2-di-(9Z-octadecenoyl)-sn-glycerol + hexadecanoyl-CoA = 1,2-di-(9Z)-octadecenoyl-3-hexadecanoyl-sn-glycerol + CoA. The enzyme catalyses 1,2-di-(9Z-octadecenoyl)-sn-glycerol + (9Z)-octadecenoyl-CoA = 1,2,3-tri-(9Z-octadecenoyl)-glycerol + CoA. The catalysed reaction is 1,3-di-(9Z-octadecenoyl)-glycerol + (9Z)-octadecenoyl-CoA = 1,2,3-tri-(9Z-octadecenoyl)-glycerol + CoA. It carries out the reaction 2,3-di-(9Z)-octadecenoyl-sn-glycerol + (9Z)-octadecenoyl-CoA = 1,2,3-tri-(9Z-octadecenoyl)-glycerol + CoA. It catalyses the reaction 2-(9Z-octadecenoyl)-glycerol + hexadecanoyl-CoA = 1-hexadecanoyl-2-(9Z-octadecenoyl)-sn-glycerol + CoA. The enzyme catalyses 2-(9Z-octadecenoyl)-glycerol + (9Z)-octadecenoyl-CoA = 1,2-di-(9Z-octadecenoyl)-sn-glycerol + CoA. The catalysed reaction is all-trans-retinol + hexadecanoyl-CoA = all-trans-retinyl hexadecanoate + CoA. It carries out the reaction 1-O-(9Z-octadecenyl)-glycerol + (9Z)-octadecenoyl-CoA = 1-O-(9Z-octadecyl)-3-(9Z-octadecenoyl)-glycerol + CoA. It catalyses the reaction 1-(9Z-octadecenoyl)-glycerol + (9Z)-octadecenoyl-CoA = 1,2-di-(9Z-octadecenoyl)-glycerol + CoA. It participates in glycerolipid metabolism; triacylglycerol biosynthesis. Its activity is regulated as follows. Inhibited by niacin. In terms of biological role, essential acyltransferase that catalyzes the terminal and only committed step in triacylglycerol synthesis by using diacylglycerol and fatty acyl CoA as substrates. Required for synthesis and storage of intracellular triglycerides. Probably plays a central role in cytosolic lipid accumulation. In liver, is primarily responsible for incorporating endogenously synthesized fatty acids into triglycerides. Also functions as an acyl-CoA retinol acyltransferase (ARAT). Also able to use 1-monoalkylglycerol (1-MAkG) as an acyl acceptor for the synthesis of monoalkyl-monoacylglycerol (MAMAG). The chain is Diacylglycerol O-acyltransferase 2 from Mus musculus (Mouse).